A 398-amino-acid chain; its full sequence is Putative molybdopterin biosynthesis protein MJ0666 (398 aa).

Belongs to the MoeA family.

The protein operates within cofactor biosynthesis; molybdopterin biosynthesis. The protein is Putative molybdopterin biosynthesis protein MJ0666 of Methanocaldococcus jannaschii (strain ATCC 43067 / DSM 2661 / JAL-1 / JCM 10045 / NBRC 100440) (Methanococcus jannaschii).